The chain runs to 1399 residues: DNA-directed RNA polymerase subunit beta' (1399 aa).

Zn(2+)-binding residues include Cys-71, Cys-73, Cys-86, and Cys-89. Asp-462, Asp-464, and Asp-466 together coordinate Mg(2+). 4 residues coordinate Zn(2+): Cys-810, Cys-884, Cys-891, and Cys-894.

Belongs to the RNA polymerase beta' chain family. As to quaternary structure, the RNAP catalytic core consists of 2 alpha, 1 beta, 1 beta' and 1 omega subunit. When a sigma factor is associated with the core the holoenzyme is formed, which can initiate transcription. It depends on Mg(2+) as a cofactor. Requires Zn(2+) as cofactor.

The enzyme catalyses RNA(n) + a ribonucleoside 5'-triphosphate = RNA(n+1) + diphosphate. Its function is as follows. DNA-dependent RNA polymerase catalyzes the transcription of DNA into RNA using the four ribonucleoside triphosphates as substrates. This is DNA-directed RNA polymerase subunit beta' from Chelativorans sp. (strain BNC1).